Consider the following 303-residue polypeptide: Serine/threonine-protein phosphatase 6 catalytic subunit (303 aa).

Mn(2+) contacts are provided by D51, H53, D79, and N111. H112 acts as the Proton donor in catalysis. Mn(2+) contacts are provided by H161 and H235.

It belongs to the PPP phosphatase family. PP-6 (PP-V) subfamily. The cofactor is Mn(2+).

Its subcellular location is the cytoplasm. The enzyme catalyses O-phospho-L-seryl-[protein] + H2O = L-seryl-[protein] + phosphate. It carries out the reaction O-phospho-L-threonyl-[protein] + H2O = L-threonyl-[protein] + phosphate. In terms of biological role, may be involved in controlling cellularization or in regulating transcription of the genes involved in this process. This Drosophila melanogaster (Fruit fly) protein is Serine/threonine-protein phosphatase 6 catalytic subunit (PpV).